A 348-amino-acid polypeptide reads, in one-letter code: Probable dual-specificity RNA methyltransferase RlmN (348 aa).

The active-site Proton acceptor is the Glu89. A Radical SAM core domain is found at 95–330 (ERDHYTLCVS…NFVRFSKGVE (236 aa)). Cys102 and Cys335 form a disulfide bridge. The [4Fe-4S] cluster site is built by Cys109, Cys113, and Cys116. S-adenosyl-L-methionine contacts are provided by residues 157 to 158 (GE), Ser189, 214 to 216 (SLN), and Asn292. The active-site S-methylcysteine intermediate is the Cys335.

This sequence belongs to the radical SAM superfamily. RlmN family. The cofactor is [4Fe-4S] cluster.

It localises to the cytoplasm. It carries out the reaction adenosine(2503) in 23S rRNA + 2 reduced [2Fe-2S]-[ferredoxin] + 2 S-adenosyl-L-methionine = 2-methyladenosine(2503) in 23S rRNA + 5'-deoxyadenosine + L-methionine + 2 oxidized [2Fe-2S]-[ferredoxin] + S-adenosyl-L-homocysteine. It catalyses the reaction adenosine(37) in tRNA + 2 reduced [2Fe-2S]-[ferredoxin] + 2 S-adenosyl-L-methionine = 2-methyladenosine(37) in tRNA + 5'-deoxyadenosine + L-methionine + 2 oxidized [2Fe-2S]-[ferredoxin] + S-adenosyl-L-homocysteine. Functionally, specifically methylates position 2 of adenine 2503 in 23S rRNA and position 2 of adenine 37 in tRNAs. The polypeptide is Probable dual-specificity RNA methyltransferase RlmN (Aquifex aeolicus (strain VF5)).